Reading from the N-terminus, the 274-residue chain is MAINLYKTSTPSTRNGTVDSQVKSNPRNNLIYGQHHCGKGRNARGIITAGHRGGGHKRLYRKIDFRRNEKDIYGRIVTIEYDPNRNAYICLIHYRDGEKRYILHPRGAIIGDTIVSGTEVPIKMGNALPLTDMPLGTAIHNIEITLGKGGQLARAAGAVAKLIAKEGKSATLKLPSGEVRLISKNCSATVGQVGNVGVNQKNLGRAGSKRWLGKRPVVRGVVMNPVDHPHGGGEGRAPIGRKKPTTPWGYPALGKRSRKRNKYSDNLILRRRSK.

2 disordered regions span residues methionine 1–valine 22 and asparagine 224–lysine 274.

Belongs to the universal ribosomal protein uL2 family. As to quaternary structure, part of the 50S ribosomal subunit.

The protein resides in the plastid. Its subcellular location is the chloroplast. This is Large ribosomal subunit protein uL2cz/uL2cy (rpl2-A) from Helianthus annuus (Common sunflower).